The primary structure comprises 651 residues: Chaperone protein HtpG (651 aa).

The tract at residues 1–353 (MAAHVEQLEF…AQDMSLNVSR (353 aa)) is a; substrate-binding. The segment at 354 to 569 (EILQQDRQIR…TFGITPALAR (216 aa)) is b. The segment at 570 to 651 (MYRASGQPVP…RLTRTVGDQT (82 aa)) is c.

The protein belongs to the heat shock protein 90 family. Homodimer.

Its subcellular location is the cytoplasm. Its function is as follows. Molecular chaperone. Has ATPase activity. This chain is Chaperone protein HtpG, found in Mycolicibacterium vanbaalenii (strain DSM 7251 / JCM 13017 / BCRC 16820 / KCTC 9966 / NRRL B-24157 / PYR-1) (Mycobacterium vanbaalenii).